The following is a 203-amino-acid chain: ATP-dependent Clp protease proteolytic subunit (203 aa).

Catalysis depends on S101, which acts as the Nucleophile. The active site involves H126.

The protein belongs to the peptidase S14 family. In terms of assembly, component of the chloroplastic Clp protease core complex.

It is found in the plastid. The protein localises to the chloroplast stroma. It catalyses the reaction Hydrolysis of proteins to small peptides in the presence of ATP and magnesium. alpha-casein is the usual test substrate. In the absence of ATP, only oligopeptides shorter than five residues are hydrolyzed (such as succinyl-Leu-Tyr-|-NHMec, and Leu-Tyr-Leu-|-Tyr-Trp, in which cleavage of the -Tyr-|-Leu- and -Tyr-|-Trp bonds also occurs).. Its function is as follows. Cleaves peptides in various proteins in a process that requires ATP hydrolysis. Has a chymotrypsin-like activity. Plays a major role in the degradation of misfolded proteins. This Marchantia polymorpha (Common liverwort) protein is ATP-dependent Clp protease proteolytic subunit.